The chain runs to 1374 residues: Y' element ATP-dependent helicase YLL066C (1374 aa).

Residues 321-345 (AGEAASSDHDQKISRVTRKRPREPK) form a disordered region. One can recognise a Helicase ATP-binding domain in the interval 375-552 (EIYMADTPSV…LQRIGLTGLA (178 aa)). An ATP-binding site is contributed by 388 to 395 (APPGYGKT). The short motif at 498–501 (DEFH) is the DEAH box element. Residues 609 to 758 (KLLLALFEIE…EFYGLESKKG (150 aa)) form the Helicase C-terminal domain. The span at 832-975 (ANASTNATTN…ATTTESTNAS (144 aa)) shows a compositional bias: low complexity. A disordered region spans residues 832–999 (ANASTNATTN…RFHPVTDINK (168 aa)). Residues 976-999 (AKEDANKDGNAEDNRFHPVTDINK) are compositionally biased toward basic and acidic residues.

It belongs to the helicase family. Yeast subtelomeric Y' repeat subfamily.

Its function is as follows. Catalyzes DNA unwinding and is involved in telomerase-independent telomere maintenance. In Saccharomyces cerevisiae (strain ATCC 204508 / S288c) (Baker's yeast), this protein is Y' element ATP-dependent helicase YLL066C.